The chain runs to 195 residues: Biogenesis of lysosome-related organelles complex 1 subunit 3 (195 aa).

Over residues 1–11 (MESSQGRRRRP) the composition is skewed to basic residues. A disordered region spans residues 1–72 (MESSQGRRRR…PEPEPTVVPV (72 aa)). Residues 25–51 (ELSASSSEEELYLGPSGPTRGRPTGLR) are compositionally biased toward low complexity. T59 is modified (phosphothreonine). S61 bears the Phosphoserine mark.

This sequence belongs to the BLOC1S3 family. Octamer composed of one copy each BLOC1S1, BLOC1S2, BLOC1S3, BLOC1S4, BLOC1S5, BLOC1S6, DTNBP1/BLOC1S7 and SNAPIN/BLOC1S8. Interacts directly with BLOC1S2. Component of the biogenesis of lysosome-related organelles complex 1 (BLOC-1) composed of BLOC1S1, BLOC1S2, BLOC1S3, BLOC1S4, BLOC1S5, BLOC1S6, DTNBP1/BLOC1S7 and SNAPIN/BLOC1S8. The BLOC-1 complex associates with the AP-3 protein complex and membrane protein cargos. Interacts with BLOC1S4, BLOC1S5 and BLOC1S6. In terms of processing, phosphorylated. Ubiquitously expressed.

It is found in the cytoplasm. In terms of biological role, component of the BLOC-1 complex, a complex that is required for normal biogenesis of lysosome-related organelles (LRO), such as platelet dense granules and melanosomes. In concert with the AP-3 complex, the BLOC-1 complex is required to target membrane protein cargos into vesicles assembled at cell bodies for delivery into neurites and nerve terminals. The BLOC-1 complex, in association with SNARE proteins, is also proposed to be involved in neurite extension. Plays a role in intracellular vesicle trafficking. The protein is Biogenesis of lysosome-related organelles complex 1 subunit 3 (Bloc1s3) of Mus musculus (Mouse).